We begin with the raw amino-acid sequence, 442 residues long: Threonine/serine transporter TdcC (442 aa).

The next 11 helical transmembrane spans lie at 21 to 41 (TTWT…FFPI), 44 to 64 (GFGG…IAFL), 96 to 116 (GVVI…IYGV), 139 to 159 (VVAL…KDLM), 162 to 182 (VMSF…LSLI), 206 to 226 (ILVT…FSPI), 258 to 278 (ASIL…FTLS), 312 to 332 (ITLE…SFFG), 364 to 384 (LISM…NPNI), 388 to 408 (IEAM…MYAI), and 422 to 442 (ENYF…YKLL).

The protein belongs to the amino acid/polyamine transporter 2 family. SdaC/TdcC subfamily.

It localises to the cell inner membrane. The enzyme catalyses L-threonine(in) + H(+)(in) = L-threonine(out) + H(+)(out). It catalyses the reaction L-serine(in) + H(+)(in) = L-serine(out) + H(+)(out). Functionally, involved in the import of threonine and serine into the cell, with the concomitant import of a proton (symport system). The chain is Threonine/serine transporter TdcC from Yersinia enterocolitica serotype O:8 / biotype 1B (strain NCTC 13174 / 8081).